The primary structure comprises 527 residues: Tubulin-specific chaperone E (527 aa).

Position 2 is an N-acetylserine (Ser2). In terms of domain architecture, CAP-Gly spans 27–71 (GVVPPVAGPWLGVEWDNPERGKHDGSHEGTVYFQCRHPTGGSFIR). LRR repeat units follow at residues 154 to 175 (NIRK…IHIA), 180 to 200 (HLEV…SVLT), 205 to 226 (ALKV…RCAM), 230 to 252 (GLEE…DVLQ), 253 to 274 (TVKL…YLIA), 278 to 299 (RLEQ…DAGI), and 308 to 329 (SLKY…NELD). The LRRCT domain maps to 342-384 (NPLTKEDKEAETARLLIIASIGQLKTLNKCEILPEERRRAELD). At Lys463 the chain carries N6-acetyllysine. At Ser495 the chain carries Phosphoserine.

This sequence belongs to the TBCE family. In terms of assembly, supercomplex made of cofactors A to E. Cofactors A and D function by capturing and stabilizing tubulin in a quasi-native conformation. Cofactor E binds to the cofactor D-tubulin complex; interaction with cofactor C then causes the release of tubulin polypeptides that are committed to the native state. Cofactors B and E can form a heterodimer which binds to alpha-tubulin and enhances their ability to dissociate tubulin heterodimers. Interacts with TBCD.

It is found in the cytoplasm. The protein localises to the cytoskeleton. Its function is as follows. Tubulin-folding protein; involved in the second step of the tubulin folding pathway and in the regulation of tubulin heterodimer dissociation. Required for correct organization of microtubule cytoskeleton and mitotic splindle, and maintenance of the neuronal microtubule network. This chain is Tubulin-specific chaperone E (TBCE), found in Pongo abelii (Sumatran orangutan).